Consider the following 362-residue polypeptide: Putative transport protein BB_0006 (362 aa).

A run of 8 helical transmembrane segments spans residues 20-40 (FYCI…EAVF), 43-63 (LAIS…LARF), 68-88 (FLIV…IFSF), 144-164 (EIIG…FLLS), 212-232 (ILVF…WAVL), 234-254 (FVFN…IVIT), 265-285 (IVLY…NILE), and 304-326 (LFFW…TVIV).

The protein belongs to the autoinducer-2 exporter (AI-2E) (TC 2.A.86) family.

The protein resides in the cell membrane. This Borreliella burgdorferi (strain ATCC 35210 / DSM 4680 / CIP 102532 / B31) (Borrelia burgdorferi) protein is Putative transport protein BB_0006.